Here is a 139-residue protein sequence, read N- to C-terminus: uncharacterized protein (139 aa).

A helical transmembrane segment spans residues 43-59; that stretch reads FGVISTLIAIFIGAFWL.

It localises to the membrane. This is an uncharacterized protein from Haemophilus influenzae (strain ATCC 51907 / DSM 11121 / KW20 / Rd).